Reading from the N-terminus, the 968-residue chain is RNA polymerase-associated protein RapA (968 aa).

The Helicase ATP-binding domain maps to 164–334; it reads DVGRRHAPRV…FARLRLLDPN (171 aa). An ATP-binding site is contributed by 177-184; the sequence is DEVGLGKT. The DEAH box motif lies at 280–283; that stretch reads DEAH. The 173-residue stretch at 490–662 folds into the Helicase C-terminal domain; it reads RVEWLMGYLT…YLASPDQTEG (173 aa).

This sequence belongs to the SNF2/RAD54 helicase family. RapA subfamily. As to quaternary structure, interacts with the RNAP. Has a higher affinity for the core RNAP than for the holoenzyme. Its ATPase activity is stimulated by binding to RNAP.

Its function is as follows. Transcription regulator that activates transcription by stimulating RNA polymerase (RNAP) recycling in case of stress conditions such as supercoiled DNA or high salt concentrations. Probably acts by releasing the RNAP, when it is trapped or immobilized on tightly supercoiled DNA. Does not activate transcription on linear DNA. Probably not involved in DNA repair. This is RNA polymerase-associated protein RapA from Escherichia fergusonii (strain ATCC 35469 / DSM 13698 / CCUG 18766 / IAM 14443 / JCM 21226 / LMG 7866 / NBRC 102419 / NCTC 12128 / CDC 0568-73).